A 354-amino-acid polypeptide reads, in one-letter code: S-adenosylmethionine:tRNA ribosyltransferase-isomerase (354 aa).

It belongs to the QueA family. In terms of assembly, monomer.

It is found in the cytoplasm. The catalysed reaction is 7-aminomethyl-7-carbaguanosine(34) in tRNA + S-adenosyl-L-methionine = epoxyqueuosine(34) in tRNA + adenine + L-methionine + 2 H(+). It participates in tRNA modification; tRNA-queuosine biosynthesis. Functionally, transfers and isomerizes the ribose moiety from AdoMet to the 7-aminomethyl group of 7-deazaguanine (preQ1-tRNA) to give epoxyqueuosine (oQ-tRNA). This is S-adenosylmethionine:tRNA ribosyltransferase-isomerase from Salmonella gallinarum (strain 287/91 / NCTC 13346).